We begin with the raw amino-acid sequence, 529 residues long: Zinc finger protein 572 (529 aa).

A disordered region spans residues 1–125 (MEQEQKLLVS…TGPAGQQNPS (125 aa)). Residue Lys-6 forms a Glycyl lysine isopeptide (Lys-Gly) (interchain with G-Cter in SUMO2) linkage. Residues 22–42 (KNTITGDESKNNLKTVQFSNS) show a composition bias toward polar residues. Positions 43–68 (KADKERASKWSRSDGPENYKDEDTKE) are enriched in basic and acidic residues. A compositionally biased stretch (polar residues) spans 87-96 (NDSNLGSQRN). 12 consecutive C2H2-type zinc fingers follow at residues 131–153 (YKCS…QRTH), 159–181 (YRCS…LRTH), 187–209 (YQCG…ERTH), 215–237 (YKCP…HRSH), 243–265 (YECP…QRTH), 271–293 (YKCP…QRTH), 299–321 (YKCP…QRIH), 327–349 (YQCI…QKMH), 383–405 (YKCC…QRTH), 411–433 (YRCS…QRTH), 439–461 (YKCP…RRTH), and 467–489 (YKCT…RKIH).

It belongs to the krueppel C2H2-type zinc-finger protein family.

The protein resides in the nucleus. In terms of biological role, may be involved in transcriptional regulation. This Bos taurus (Bovine) protein is Zinc finger protein 572 (ZNF572).